The sequence spans 343 residues: Fructose-1,6-bisphosphatase, cytosolic (343 aa).

The Mg(2+) site is built by Glu71, Glu100, Asp121, Leu123, and Asp124. Substrate-binding positions include 124–127 (DGSS), Asn215, Tyr247, Tyr267, and Lys277. Glu283 is a Mg(2+) binding site.

This sequence belongs to the FBPase class 1 family. Requires Mg(2+) as cofactor.

Its subcellular location is the cytoplasm. The enzyme catalyses beta-D-fructose 1,6-bisphosphate + H2O = beta-D-fructose 6-phosphate + phosphate. This is Fructose-1,6-bisphosphatase, cytosolic (CFBP) from Saccharum hybrid (Sugarcane).